Consider the following 417-residue polypeptide: NADH-quinone oxidoreductase subunit D (417 aa).

Belongs to the complex I 49 kDa subunit family. NDH-1 is composed of 14 different subunits. Subunits NuoB, C, D, E, F, and G constitute the peripheral sector of the complex.

It is found in the cell inner membrane. The catalysed reaction is a quinone + NADH + 5 H(+)(in) = a quinol + NAD(+) + 4 H(+)(out). Functionally, NDH-1 shuttles electrons from NADH, via FMN and iron-sulfur (Fe-S) centers, to quinones in the respiratory chain. The immediate electron acceptor for the enzyme in this species is believed to be ubiquinone. Couples the redox reaction to proton translocation (for every two electrons transferred, four hydrogen ions are translocated across the cytoplasmic membrane), and thus conserves the redox energy in a proton gradient. This Hydrogenovibrio crunogenus (strain DSM 25203 / XCL-2) (Thiomicrospira crunogena) protein is NADH-quinone oxidoreductase subunit D.